The sequence spans 66 residues: UPF0434 protein Mnod_1613 (66 aa).

It belongs to the UPF0434 family.

The protein is UPF0434 protein Mnod_1613 of Methylobacterium nodulans (strain LMG 21967 / CNCM I-2342 / ORS 2060).